A 364-amino-acid polypeptide reads, in one-letter code: DNA primase large subunit PriL (364 aa).

[4Fe-4S] cluster-binding residues include C237, C309, C318, and C325. The disordered stretch occupies residues 345-364 (MQNDNEKGHEEKKEGETPPQ).

Belongs to the eukaryotic-type primase large subunit family. Heterodimer of a small subunit (PriS) and a large subunit (PriL). [4Fe-4S] cluster is required as a cofactor.

Functionally, regulatory subunit of DNA primase, an RNA polymerase that catalyzes the synthesis of short RNA molecules used as primers for DNA polymerase during DNA replication. Stabilizes and modulates the activity of the small subunit, increasing the rate of DNA synthesis, and conferring RNA synthesis capability. The DNA polymerase activity may enable DNA primase to also catalyze primer extension after primer synthesis. May also play a role in DNA repair. The sequence is that of DNA primase large subunit PriL from Methanococcoides burtonii (strain DSM 6242 / NBRC 107633 / OCM 468 / ACE-M).